We begin with the raw amino-acid sequence, 99 residues long: Large ribosomal subunit protein bL27 (99 aa).

Positions 1-10 (MKLIFDIQLF) are excised as a propeptide.

This sequence belongs to the bacterial ribosomal protein bL27 family. Post-translationally, the N-terminus is cleaved by ribosomal processing cysteine protease Prp.

This Caldicellulosiruptor saccharolyticus (strain ATCC 43494 / DSM 8903 / Tp8T 6331) protein is Large ribosomal subunit protein bL27.